A 487-amino-acid chain; its full sequence is Phosphatidylserine synthase 2 (487 aa).

Residues 1 to 10 (MRRGERRDAG) are compositionally biased toward basic and acidic residues. A disordered region spans residues 1 to 50 (MRRGERRDAGGPRPESPVPAGRASLEEPPDGPSAGQATGPGEGRRSTESE). Over 1 to 62 (MRRGERRDAG…DDGTNTFFWR (62 aa)) the chain is Cytoplasmic. Residues Ser16 and Ser24 each carry the phosphoserine modification. The helical transmembrane segment at 63-83 (AHTLTVLFILTCTLGYVTLLE) threads the bilayer. The Lumenal segment spans residues 84 to 96 (ETPQDTAYNTKRG). Residues 97–117 (IVASILVFLCFGVTQAKDGPF) form a helical membrane-spanning segment. Over 118–126 (SRPHPAYWR) the chain is Cytoplasmic. The chain crosses the membrane as a helical span at residues 127–147 (FWLCVSVVYELFLIFILFQTV). Residues 148-313 (QDGRQFLKYV…EWKPASSLRR (166 aa)) are Lumenal-facing. N-linked (GlcNAc...) asparagine glycosylation occurs at Asn181. The helical transmembrane segment at 314 to 334 (WLAVCGIILVFLLAELNTFYL) threads the bilayer. Residue Lys335 is a topological domain, cytoplasmic. A helical membrane pass occupies residues 336-356 (FVLWMPPEHYLVLLRLVFFVN). The Lumenal portion of the chain corresponds to 357–376 (VGGVAMREIYDFMDDPKPHK). A helical membrane pass occupies residues 377-397 (KLGPQAWLVAAITATELLIVV). The Cytoplasmic portion of the chain corresponds to 398-403 (KYDPHT). A helical membrane pass occupies residues 404 to 424 (LTLSLPFYISQCWTLGSVLAL). The Lumenal portion of the chain corresponds to 425-487 (TWTVWRFFLR…AEGEGAPTPN (63 aa)). The disordered stretch occupies residues 451-487 (KDDQGSTVGNGDQHPLGLDEDLLGPGVAEGEGAPTPN). The residue at position 485 (Thr485) is a Phosphothreonine.

It belongs to the phosphatidyl serine synthase family.

It localises to the endoplasmic reticulum membrane. The catalysed reaction is a 1,2-diacyl-sn-glycero-3-phosphoethanolamine + L-serine = a 1,2-diacyl-sn-glycero-3-phospho-L-serine + ethanolamine. It catalyses the reaction 1-hexadecanoyl-2-(9Z-octadecenoyl)-sn-glycero-3-phosphoethanolamine + L-serine = 1-hexadecanoyl-2-(9Z-octadecenoyl)-sn-glycero-3-phospho-L-serine + ethanolamine. The enzyme catalyses 1-hexadecanoyl-2-(4Z,7Z,10Z,13Z,16Z,19Z-docosahexaenoyl)-sn-glycero-3-phosphoethanolamine + L-serine = 1-hexadecanoyl-2-(4Z,7Z,10Z,13Z,16Z,19Z-docosahexaenoyl)-sn-glycero-3-phosphoserine + ethanolamine. It carries out the reaction 1-octadecanoyl-2-(5Z,8Z,11Z,14Z)-eicosatetraenoyl-sn-glycero-3-phosphoethanolamine + L-serine = 1-octadecanoyl-2-(5Z,8Z,11Z,14Z)-eicosatetraenoyl-sn-glycero-3-phosphoserine + ethanolamine. The catalysed reaction is 1-octadecanoyl-2-(4Z,7Z,10Z,13Z,16Z,19Z-docosahexaenoyl)-sn-glycero-3-phosphoethanolamine + L-serine = 1-octadecanoyl-2-(4Z,7Z,10Z,13Z,16Z,19Z-docosahexaenoyl)-sn-glycero-3-phosphoserine + ethanolamine. It catalyses the reaction 1-(1Z-octadecenyl)-2-(4Z,7Z,10Z,13Z,16Z,19Z-docosahexaenoyl)-sn-glycero-3-phosphoethanolamine + L-serine = 1-(1Z-octadecenyl)-2-(4Z,7Z,10Z,13Z,16Z,19Z-docosahexaenoyl)-sn-glycero-3-phospho-L-serine + ethanolamine. The enzyme catalyses 1-octadecanoyl-2-(9Z-octadecenoyl)-sn-glycero-3-phosphoethanolamine + L-serine = 1-octadecanoyl-2-(9Z-octadecenoyl)-sn-glycero-3-phospho-L-serine + ethanolamine. It carries out the reaction 1-(1Z-octadecenyl)-2-(9Z-octadecenoyl)-sn-glycero-3-phosphoethanolamine + L-serine = 1-(1Z-octadecenyl)-2-(9Z-octadecenoyl)-sn-glycero-3-phospho-L-serine + ethanolamine. The catalysed reaction is 1-(1Z-octadecenyl)-2-(5Z,8Z,11Z,14Z- eicosatetraenoyl)-sn-glycero-3-phosphoethanolamine + L-serine = 1-(1Z-octadecenyl)-2-(5Z,8Z,11Z,14Z-eicosatetraenoyl)-sn-glycero-3-phospho-L-serine + ethanolamine. Its pathway is phospholipid metabolism; phosphatidylserine biosynthesis. Its activity is regulated as follows. Requires calcium ions. Inhibited by exogenous phosphatidylserine. In terms of biological role, catalyzes a base-exchange reaction in which the polar head group of phosphatidylethanolamine (PE) or phosphatidylcholine (PC) is replaced by L-serine. Catalyzes the conversion of phosphatatidylethanolamine and does not act on phosphatidylcholine. Can utilize both phosphatidylethanolamine (PE) plasmalogen and diacyl PE as substrate and the latter is six times better utilized, indicating the importance of an ester linkage at the sn-1 position. Although it shows no sn-1 fatty acyl preference, exhibits significant preference towards docosahexaenoic acid (22:6n-3) compared with 18:1 or 20:4 at the sn-2 position. The sequence is that of Phosphatidylserine synthase 2 (PTDSS2) from Homo sapiens (Human).